A 492-amino-acid chain; its full sequence is MLSRWTRRVNESRLAQRKLTLLGRAIALVVGELLFNAVCWIAAGICFGKTDGILGLALLAWTIGLRHGLDADHISAIDNATRQLVSQGQLPITCGLFFSLGHSTIVIVVNVAIAVSVDIYDKLDRVGSIGGIVGAAVSASFLFLIACLNIYFLVGAIKQRRSMKRRQALGLPPDEDEGDPSKIYGGGCMVRVVGPILRAVDRPWKMYPVGVLFGFGFDTASSIALLAISAIAQRGPNGDAISHGKIVILPFLFTAGMSLVDSLDSILMLYAYATPDSTSPEGKLALLQYPDPNYKDSYLEETVATTLPAEDGQTERHVIEPIDIPQGETEGLETEDNIKAKTGNEILVEEERVGGPSRVDGSGGVGNERVMKAKANTMSSLSIILTLLSILVALSISLIEIMGLIGDNCTQCQDAANDPDGGGLAGSWWRAWARANDQSGYIGAAIVGCFAAILAGWYGAKWGKKKWKARRDANAAIVLEDNEDDAAETPVA.

Over M1–R24 the chain is Cytoplasmic. The chain crosses the membrane as a helical span at residues A25 to I45. At C46–T50 the chain is on the extracellular side. The chain crosses the membrane as a helical span at residues D51–A71. Over D72–C94 the chain is Cytoplasmic. Residues G95–V115 traverse the membrane as a helical segment. Over S116–A136 the chain is Extracellular. A helical membrane pass occupies residues V137–I157. At K158–G210 the chain is on the cytoplasmic side. A helical membrane pass occupies residues V211–I231. At A232–D239 the chain is on the extracellular side. A helical membrane pass occupies residues A240 to V260. Topologically, residues D261–S382 are cytoplasmic. The chain crosses the membrane as a helical span at residues I383–G403. The Extracellular portion of the chain corresponds to L404–S439. N408 is a glycosylation site (N-linked (GlcNAc...) asparagine). The helical transmembrane segment at G440–A460 threads the bilayer. The Cytoplasmic portion of the chain corresponds to K461–A492.

This sequence belongs to the NiCoT transporter (TC 2.A.52) family.

It is found in the cell membrane. Its function is as follows. High-affinity nickel-specific transporter responsible for nickel uptake and required for high levels of activity of urease URE1. Does not transport cobalt. Plays a role in host brain invasion. The sequence is that of High-affinity nickel transport protein from Cryptococcus neoformans var. grubii serotype A (strain H99 / ATCC 208821 / CBS 10515 / FGSC 9487) (Filobasidiella neoformans var. grubii).